The following is a 59-amino-acid chain: Large ribosomal subunit protein bL32 (59 aa).

A disordered region spans residues 1 to 59 (MAVQQNKKSPSKRGMHRSHDFLTNPPLAVEPTSGEIHLRHHVSPNGYYRGRKVLPAKGE). Residues 49–59 (RGRKVLPAKGE) show a composition bias toward basic residues.

This sequence belongs to the bacterial ribosomal protein bL32 family.

This is Large ribosomal subunit protein bL32 from Methylobacillus flagellatus (strain ATCC 51484 / DSM 6875 / VKM B-1610 / KT).